Consider the following 737-residue polypeptide: Autolysin (737 aa).

Positions 1-13 (MKKESMSRIERRK) are enriched in basic and acidic residues. Disordered stretches follow at residues 1–28 (MKKE…KKST), 51–132 (AEAT…TDSS), and 335–360 (PSSG…SGTN). The signal sequence occupies residues 1–53 (MKKESMSRIERRKAQQRKKTPVQWKKSTTLFSSALIVSSVGTPVALLPVTAEA). The span at 67–117 (PTTETGLVETPTTETTPGTTEQPTTDSSTTTESTTESSKETPTTPSTEQPT) shows a compositional bias: low complexity. The segment covering 118-132 (ADSTTPVESGTTDSS) has biased composition (polar residues). Over residues 339–352 (GNTGGGTVNPGTGG) the composition is skewed to gly residues. Residues 361-404 (TYYTVKSGDTLNKIAAQYGVSVANLRSWNGISGDLIFVGQKLIV) enclose the LysM 1 domain. Positions 409-429 (SGNTGGSGSGGSNNNQSGTNT) are disordered. Residues 410–419 (GNTGGSGSGG) show a composition bias toward gly residues. Low complexity predominate over residues 420 to 429 (SNNNQSGTNT). LysM domains follow at residues 429–472 (TYYT…KLIV), 497–540 (TYYT…KIIV), 565–608 (TYYT…KIIV), 631–674 (TSYT…TIIV), and 693–736 (KRHT…TLKV).

This sequence belongs to the glycosyl hydrolase 73 family.

The protein resides in the secreted. Its function is as follows. Hydrolyzes the cell wall of E.faecalis and M.lysodeikticus. May play an important role in cell wall growth and cell separation. This is Autolysin from Enterococcus faecalis (strain ATCC 700802 / V583).